The following is a 338-amino-acid chain: Sulfotransferase 2B1 (338 aa).

67-72 (KSGTNW) provides a ligand contact to 3'-phosphoadenylyl sulfate. Residues tryptophan 95 and tryptophan 100 each contribute to the substrate site. Histidine 122 functions as the Proton acceptor in the catalytic mechanism. 3'-phosphoadenylyl sulfate-binding positions include arginine 144, serine 152, tyrosine 207, 241–246 (SAFAAM), and 271–273 (RKG). The segment at 301-338 (VQRFPWDTSEEDSSPDGQPDPEPSPSPASDDPNPGSSQ) is disordered. Positions 327–338 (PASDDPNPGSSQ) are enriched in low complexity.

This sequence belongs to the sulfotransferase 1 family. Expressed at high levels in epididymis, intestine and uterus, and low levels in brain and hypothalamus. Isoform 2 is most prominent in the brain and spinal cord, with modest expression in the lung, skin and spleen. Isoform 1 is most prominently expressed in skin and small intestine, with modest expression in muscle and prostate.

It is found in the cytoplasm. The protein localises to the cytosol. The protein resides in the microsome. It localises to the nucleus. The catalysed reaction is an alcohol + 3'-phosphoadenylyl sulfate = an alkyl sulfate + adenosine 3',5'-bisphosphate + H(+). The enzyme catalyses pregnenolone + 3'-phosphoadenylyl sulfate = pregnenolone sulfate + adenosine 3',5'-bisphosphate + H(+). It catalyses the reaction 3beta-hydroxyandrost-5-en-17-one + 3'-phosphoadenylyl sulfate = dehydroepiandrosterone 3-sulfate + adenosine 3',5'-bisphosphate + H(+). It carries out the reaction cholesterol + 3'-phosphoadenylyl sulfate = cholesterol sulfate + adenosine 3',5'-bisphosphate + H(+). Sulfotransferase that utilizes 3'-phospho-5'-adenylyl sulfate (PAPS) as sulfonate donor to catalyze the sulfate conjugation. Preferentially sulfonates cholesterol. Catalyzes sulfation of the 3beta-hydroxyl groups of steroids, such as, pregnenolone and dehydroepiandrosterone (DHEA). Cholesterol sulfation is approximately 10-fold higher than for pregnenolone and 20-fold higher than for DHEA. Plays a role in epidermal cholesterol metabolism and in the regulation of epidermal proliferation and differentiation. Its function is as follows. Strongly sulfonates pregnenolone, however is capable to sulfonate cholesterol with a high degree of efficiency. DHEA is a relatively poor substrate. The protein is Sulfotransferase 2B1 (Sult2b1) of Mus musculus (Mouse).